A 381-amino-acid polypeptide reads, in one-letter code: Heme A synthase (381 aa).

5 helical membrane passes run 25–45, 112–132, 138–158, 176–196, and 212–232; these read GAVR…VAVG, LLGR…WWRG, LLLG…IGWI, LALH…LAAG, and VAGL…LVAG. A heme-binding site is contributed by histidine 277. The next 3 membrane-spanning stretches (helical) occupy residues 279–299, 307–327, and 329–349; these read LFAY…VRMA, AMGV…TLLL, and VPLW…IMAT. Histidine 337 lines the heme pocket.

It belongs to the COX15/CtaA family. Type 2 subfamily. As to quaternary structure, interacts with CtaB. It depends on heme b as a cofactor.

It localises to the cell membrane. The catalysed reaction is Fe(II)-heme o + 2 A + H2O = Fe(II)-heme a + 2 AH2. It functions in the pathway porphyrin-containing compound metabolism; heme A biosynthesis; heme A from heme O: step 1/1. Its function is as follows. Catalyzes the conversion of heme O to heme A by two successive hydroxylations of the methyl group at C8. The first hydroxylation forms heme I, the second hydroxylation results in an unstable dihydroxymethyl group, which spontaneously dehydrates, resulting in the formyl group of heme A. The chain is Heme A synthase from Methylorubrum populi (strain ATCC BAA-705 / NCIMB 13946 / BJ001) (Methylobacterium populi).